A 428-amino-acid chain; its full sequence is Adenylosuccinate synthetase (428 aa).

GTP-binding positions include G12–K18 and G40–T42. The active-site Proton acceptor is the D13. Mg(2+)-binding residues include D13 and G40. IMP-binding positions include D13–K16, N38–H41, T130, R144, Q225, T240, and R304. H41 serves as the catalytic Proton donor. V300–R306 serves as a coordination point for substrate. GTP contacts are provided by residues R306, K332–D334, and G414–G416.

Belongs to the adenylosuccinate synthetase family. As to quaternary structure, homodimer. The cofactor is Mg(2+).

Its subcellular location is the cytoplasm. The catalysed reaction is IMP + L-aspartate + GTP = N(6)-(1,2-dicarboxyethyl)-AMP + GDP + phosphate + 2 H(+). It functions in the pathway purine metabolism; AMP biosynthesis via de novo pathway; AMP from IMP: step 1/2. Its function is as follows. Plays an important role in the de novo pathway of purine nucleotide biosynthesis. Catalyzes the first committed step in the biosynthesis of AMP from IMP. The polypeptide is Adenylosuccinate synthetase (Clostridium beijerinckii (strain ATCC 51743 / NCIMB 8052) (Clostridium acetobutylicum)).